A 403-amino-acid polypeptide reads, in one-letter code: Phosphoglycerate kinase (403 aa).

Substrate-binding positions include 21 to 23, Arg-36, 59 to 62, Arg-118, and Arg-151; these read DFN and HLGR. Residues Lys-202, Glu-328, and 354 to 357 each bind ATP; that span reads GGDS.

This sequence belongs to the phosphoglycerate kinase family. As to quaternary structure, monomer.

Its subcellular location is the cytoplasm. The catalysed reaction is (2R)-3-phosphoglycerate + ATP = (2R)-3-phospho-glyceroyl phosphate + ADP. The protein operates within carbohydrate degradation; glycolysis; pyruvate from D-glyceraldehyde 3-phosphate: step 2/5. The protein is Phosphoglycerate kinase of Akkermansia muciniphila (strain ATCC BAA-835 / DSM 22959 / JCM 33894 / BCRC 81048 / CCUG 64013 / CIP 107961 / Muc).